Reading from the N-terminus, the 1209-residue chain is ATP-dependent helicase/nuclease subunit A (1209 aa).

The region spanning 9–482 (SQWTDEQWQA…IDLAKNFRSR (474 aa)) is the UvrD-like helicase ATP-binding domain. 30 to 37 (AAAGSGKT) is an ATP binding site. One can recognise a UvrD-like helicase C-terminal domain in the interval 510 to 798 (AALRFGAQDY…RMMTIHKSKG (289 aa)).

This sequence belongs to the helicase family. AddA subfamily. As to quaternary structure, heterodimer of AddA and AddB/RexB. It depends on Mg(2+) as a cofactor.

It carries out the reaction Couples ATP hydrolysis with the unwinding of duplex DNA by translocating in the 3'-5' direction.. It catalyses the reaction ATP + H2O = ADP + phosphate + H(+). In terms of biological role, the heterodimer acts as both an ATP-dependent DNA helicase and an ATP-dependent, dual-direction single-stranded exonuclease. Recognizes the chi site generating a DNA molecule suitable for the initiation of homologous recombination. The AddA nuclease domain is required for chi fragment generation; this subunit has the helicase and 3' -&gt; 5' nuclease activities. This chain is ATP-dependent helicase/nuclease subunit A, found in Anoxybacillus flavithermus (strain DSM 21510 / WK1).